Here is a 334-residue protein sequence, read N- to C-terminus: DNA-directed RNA polymerase subunit alpha (334 aa).

The alpha N-terminal domain (alpha-NTD) stretch occupies residues 1–233; that stretch reads MADQTISNVL…NLFTPLVSQE (233 aa). The alpha C-terminal domain (alpha-CTD) stretch occupies residues 263-334; that stretch reads DNENSYNLYN…QLKKRFKIQL (72 aa).

This sequence belongs to the RNA polymerase alpha chain family. As to quaternary structure, in plastids the minimal PEP RNA polymerase catalytic core is composed of four subunits: alpha, beta, beta', and beta''. When a (nuclear-encoded) sigma factor is associated with the core the holoenzyme is formed, which can initiate transcription.

It is found in the plastid. Its subcellular location is the chloroplast. It catalyses the reaction RNA(n) + a ribonucleoside 5'-triphosphate = RNA(n+1) + diphosphate. In terms of biological role, DNA-dependent RNA polymerase catalyzes the transcription of DNA into RNA using the four ribonucleoside triphosphates as substrates. The chain is DNA-directed RNA polymerase subunit alpha from Chaetosphaeridium globosum (Charophycean green alga).